The sequence spans 153 residues: Lipoprotein signal peptidase (153 aa).

Helical transmembrane passes span 11 to 31 (ILIL…SLFV), 39 to 59 (DCID…FAFL), and 68 to 88 (LVLV…CYAI). Active-site residues include Asp112 and Asp129. The chain crosses the membrane as a helical span at residues 122–142 (FAVFNFADVMIDVAVVWILLL).

Belongs to the peptidase A8 family.

The protein resides in the cell inner membrane. It carries out the reaction Release of signal peptides from bacterial membrane prolipoproteins. Hydrolyzes -Xaa-Yaa-Zaa-|-(S,diacylglyceryl)Cys-, in which Xaa is hydrophobic (preferably Leu), and Yaa (Ala or Ser) and Zaa (Gly or Ala) have small, neutral side chains.. The protein operates within protein modification; lipoprotein biosynthesis (signal peptide cleavage). Its function is as follows. This protein specifically catalyzes the removal of signal peptides from prolipoproteins. In Sulfurimonas denitrificans (strain ATCC 33889 / DSM 1251) (Thiomicrospira denitrificans (strain ATCC 33889 / DSM 1251)), this protein is Lipoprotein signal peptidase.